We begin with the raw amino-acid sequence, 1236 residues long: DNA topoisomerase 2 (1236 aa).

ATP is bound by residues Asn65, Asn96, 124 to 126, 137 to 144, and 354 to 356; these read SSN, GRHGYGAK, and QSK. Residues 434-548 enclose the Toprim domain; it reads RTLIITEGDS…KLLQNNPGYI (115 aa). Positions 440, 517, and 519 each coordinate Mg(2+). The region spanning 685 to 1101 is the Topo IIA-type catalytic domain; it reads IPHCVDGLKP…TPVKMWLTEL (417 aa). Tyr775 acts as the O-(5'-phospho-DNA)-tyrosine intermediate in catalysis. The segment at 956 to 965 is interaction with DNA; that stretch reads ALAQRIYING. The interval 1161 to 1211 is disordered; that stretch reads YEKPPPSKRRPGESVGGARPSDSAARTVGKRLVGSRSEFKNKKPMSRKNNV.

The protein belongs to the type II topoisomerase family. Homodimer. The cofactor is Mg(2+). Requires Mn(2+) as cofactor. Ca(2+) serves as cofactor.

The protein localises to the nucleus. The enzyme catalyses ATP-dependent breakage, passage and rejoining of double-stranded DNA.. Control of topological states of DNA by transient breakage and subsequent rejoining of DNA strands. Topoisomerase II makes double-strand breaks. This Leishmania chagasi protein is DNA topoisomerase 2 (TOP2).